Consider the following 106-residue polypeptide: MAKSLRASSHLNAKSVKRRGVFQKAVDAREQRISDKLKEDLLKQKLEDLKKKEEQGIDMDVDEKKSNEEAPRKKISTSGWRDGRHHTYKKAKLMKQSKKKTSFTRF.

Over residues 1–12 the composition is skewed to polar residues; the sequence is MAKSLRASSHLN. 2 disordered regions span residues 1-21 and 52-106; these read MAKS…RRGV and KEEQ…FTRF. Residues 62–72 show a composition bias toward basic and acidic residues; it reads DEKKSNEEAPR. The span at 83–106 shows a compositional bias: basic residues; the sequence is GRHHTYKKAKLMKQSKKKTSFTRF.

This sequence belongs to the UPF0642 family.

The sequence is that of UPF0642 protein YBL028C from Saccharomyces cerevisiae (strain ATCC 204508 / S288c) (Baker's yeast).